Here is a 723-residue protein sequence, read N- to C-terminus: Malate synthase G (723 aa).

Acetyl-CoA is bound by residues V118, R125 to Y126, S274, and R311. R338 functions as the Proton acceptor in the catalytic mechanism. Glyoxylate contacts are provided by residues R338, E427, and G452–D455. Positions 427 and 455 each coordinate Mg(2+). An acetyl-CoA-binding site is contributed by P536. At C617 the chain carries Cysteine sulfenic acid (-SOH). D631 (proton donor) is an active-site residue. Residue C688 is modified to Cysteine sulfenic acid (-SOH).

This sequence belongs to the malate synthase family. GlcB subfamily. Monomer. The cofactor is Mg(2+).

It is found in the cytoplasm. The enzyme catalyses glyoxylate + acetyl-CoA + H2O = (S)-malate + CoA + H(+). The protein operates within carbohydrate metabolism; glyoxylate cycle; (S)-malate from isocitrate: step 2/2. Functionally, involved in the glycolate utilization. Catalyzes the condensation and subsequent hydrolysis of acetyl-coenzyme A (acetyl-CoA) and glyoxylate to form malate and CoA. The polypeptide is Malate synthase G (Escherichia coli O6:H1 (strain CFT073 / ATCC 700928 / UPEC)).